The chain runs to 491 residues: UDP-N-acetylmuramoyl-L-alanyl-D-glutamate--2,6-diaminopimelate ligase (491 aa).

A UDP-N-acetyl-alpha-D-muramoyl-L-alanyl-D-glutamate-binding site is contributed by serine 30. 108-114 (GTNGKTT) is an ATP binding site. Residues asparagine 149, 150 to 151 (TT), serine 177, glutamine 183, and arginine 185 each bind UDP-N-acetyl-alpha-D-muramoyl-L-alanyl-D-glutamate. Position 217 is an N6-carboxylysine (lysine 217). Meso-2,6-diaminopimelate contacts are provided by residues arginine 383, 407–410 (DNPR), glycine 458, and glutamate 462. The short motif at 407–410 (DNPR) is the Meso-diaminopimelate recognition motif element.

It belongs to the MurCDEF family. MurE subfamily. Mg(2+) is required as a cofactor. Post-translationally, carboxylation is probably crucial for Mg(2+) binding and, consequently, for the gamma-phosphate positioning of ATP.

It localises to the cytoplasm. It carries out the reaction UDP-N-acetyl-alpha-D-muramoyl-L-alanyl-D-glutamate + meso-2,6-diaminopimelate + ATP = UDP-N-acetyl-alpha-D-muramoyl-L-alanyl-gamma-D-glutamyl-meso-2,6-diaminopimelate + ADP + phosphate + H(+). Its pathway is cell wall biogenesis; peptidoglycan biosynthesis. Its function is as follows. Catalyzes the addition of meso-diaminopimelic acid to the nucleotide precursor UDP-N-acetylmuramoyl-L-alanyl-D-glutamate (UMAG) in the biosynthesis of bacterial cell-wall peptidoglycan. This chain is UDP-N-acetylmuramoyl-L-alanyl-D-glutamate--2,6-diaminopimelate ligase, found in Listeria monocytogenes serovar 1/2a (strain ATCC BAA-679 / EGD-e).